Here is a 284-residue protein sequence, read N- to C-terminus: Bifunctional protein FolD (284 aa).

Residues 166 to 168 (GAS) and Ile-232 contribute to the NADP(+) site.

Belongs to the tetrahydrofolate dehydrogenase/cyclohydrolase family. In terms of assembly, homodimer.

It carries out the reaction (6R)-5,10-methylene-5,6,7,8-tetrahydrofolate + NADP(+) = (6R)-5,10-methenyltetrahydrofolate + NADPH. The catalysed reaction is (6R)-5,10-methenyltetrahydrofolate + H2O = (6R)-10-formyltetrahydrofolate + H(+). It functions in the pathway one-carbon metabolism; tetrahydrofolate interconversion. Its function is as follows. Catalyzes the oxidation of 5,10-methylenetetrahydrofolate to 5,10-methenyltetrahydrofolate and then the hydrolysis of 5,10-methenyltetrahydrofolate to 10-formyltetrahydrofolate. This Shewanella baltica (strain OS195) protein is Bifunctional protein FolD.